A 403-amino-acid chain; its full sequence is Argininosuccinate synthase (403 aa).

An ATP-binding site is contributed by 10-18 (AYSGGLDTS). L-citrulline-binding residues include tyrosine 88 and serine 93. Glycine 118 is an ATP binding site. Threonine 120, asparagine 124, and aspartate 125 together coordinate L-aspartate. Residue asparagine 124 participates in L-citrulline binding. L-citrulline-binding residues include arginine 128, serine 177, serine 186, glutamate 263, and tyrosine 275.

Belongs to the argininosuccinate synthase family. Type 1 subfamily. In terms of assembly, homotetramer.

Its subcellular location is the cytoplasm. The enzyme catalyses L-citrulline + L-aspartate + ATP = 2-(N(omega)-L-arginino)succinate + AMP + diphosphate + H(+). It participates in amino-acid biosynthesis; L-arginine biosynthesis; L-arginine from L-ornithine and carbamoyl phosphate: step 2/3. This Clostridium perfringens (strain ATCC 13124 / DSM 756 / JCM 1290 / NCIMB 6125 / NCTC 8237 / Type A) protein is Argininosuccinate synthase.